The following is a 229-amino-acid chain: Potassium/proton antiporter CemA (229 aa).

The next 4 helical transmembrane spans lie at 7–27 (FTSLLYLASIVFLPWWISLSF), 114–134 (IICFVILSGYSILGNEELVIL), 145–165 (LSDTIKAFWILLLTDFFIGFH), and 189–209 (ILSSLVCIFPVILDTLFKFWV).

The protein belongs to the CemA family.

The protein localises to the plastid. Its subcellular location is the chloroplast inner membrane. The enzyme catalyses K(+)(in) + H(+)(out) = K(+)(out) + H(+)(in). In terms of biological role, contributes to K(+)/H(+) antiport activity by supporting proton efflux to control proton extrusion and homeostasis in chloroplasts in a light-dependent manner to modulate photosynthesis. Prevents excessive induction of non-photochemical quenching (NPQ) under continuous-light conditions. Indirectly promotes efficient inorganic carbon uptake into chloroplasts. The polypeptide is Potassium/proton antiporter CemA (Daucus carota (Wild carrot)).